A 95-amino-acid polypeptide reads, in one-letter code: Aspartyl/glutamyl-tRNA(Asn/Gln) amidotransferase subunit C (95 aa).

This sequence belongs to the GatC family. In terms of assembly, heterotrimer of A, B and C subunits.

The catalysed reaction is L-glutamyl-tRNA(Gln) + L-glutamine + ATP + H2O = L-glutaminyl-tRNA(Gln) + L-glutamate + ADP + phosphate + H(+). It carries out the reaction L-aspartyl-tRNA(Asn) + L-glutamine + ATP + H2O = L-asparaginyl-tRNA(Asn) + L-glutamate + ADP + phosphate + 2 H(+). Its function is as follows. Allows the formation of correctly charged Asn-tRNA(Asn) or Gln-tRNA(Gln) through the transamidation of misacylated Asp-tRNA(Asn) or Glu-tRNA(Gln) in organisms which lack either or both of asparaginyl-tRNA or glutaminyl-tRNA synthetases. The reaction takes place in the presence of glutamine and ATP through an activated phospho-Asp-tRNA(Asn) or phospho-Glu-tRNA(Gln). This chain is Aspartyl/glutamyl-tRNA(Asn/Gln) amidotransferase subunit C, found in Halothermothrix orenii (strain H 168 / OCM 544 / DSM 9562).